The chain runs to 478 residues: UDP-N-acetylmuramate--L-alanine ligase (478 aa).

Residue 120–126 (GSHGKTT) coordinates ATP.

It belongs to the MurCDEF family.

The protein resides in the cytoplasm. The enzyme catalyses UDP-N-acetyl-alpha-D-muramate + L-alanine + ATP = UDP-N-acetyl-alpha-D-muramoyl-L-alanine + ADP + phosphate + H(+). Its pathway is cell wall biogenesis; peptidoglycan biosynthesis. In terms of biological role, cell wall formation. In Rickettsia felis (strain ATCC VR-1525 / URRWXCal2) (Rickettsia azadi), this protein is UDP-N-acetylmuramate--L-alanine ligase.